Reading from the N-terminus, the 216-residue chain is NADH-quinone oxidoreductase subunit C (216 aa).

Belongs to the complex I 30 kDa subunit family. NDH-1 is composed of 14 different subunits. Subunits NuoB, C, D, E, F, and G constitute the peripheral sector of the complex.

The protein localises to the cell inner membrane. It carries out the reaction a quinone + NADH + 5 H(+)(in) = a quinol + NAD(+) + 4 H(+)(out). Functionally, NDH-1 shuttles electrons from NADH, via FMN and iron-sulfur (Fe-S) centers, to quinones in the respiratory chain. The immediate electron acceptor for the enzyme in this species is believed to be ubiquinone. Couples the redox reaction to proton translocation (for every two electrons transferred, four hydrogen ions are translocated across the cytoplasmic membrane), and thus conserves the redox energy in a proton gradient. This is NADH-quinone oxidoreductase subunit C from Francisella tularensis subsp. holarctica (strain OSU18).